The sequence spans 424 residues: UDP-N-acetylglucosamine 1-carboxyvinyltransferase (424 aa).

22-23 (KN) is a binding site for phosphoenolpyruvate. Arg93 contributes to the UDP-N-acetyl-alpha-D-glucosamine binding site. The Proton donor role is filled by Cys117. Position 117 is a 2-(S-cysteinyl)pyruvic acid O-phosphothioketal (Cys117). Residues 122–126 (RPVDL), Asp307, and Ile329 each bind UDP-N-acetyl-alpha-D-glucosamine.

This sequence belongs to the EPSP synthase family. MurA subfamily.

The protein resides in the cytoplasm. It catalyses the reaction phosphoenolpyruvate + UDP-N-acetyl-alpha-D-glucosamine = UDP-N-acetyl-3-O-(1-carboxyvinyl)-alpha-D-glucosamine + phosphate. It functions in the pathway cell wall biogenesis; peptidoglycan biosynthesis. In terms of biological role, cell wall formation. Adds enolpyruvyl to UDP-N-acetylglucosamine. The polypeptide is UDP-N-acetylglucosamine 1-carboxyvinyltransferase (Chlorobaculum parvum (strain DSM 263 / NCIMB 8327) (Chlorobium vibrioforme subsp. thiosulfatophilum)).